We begin with the raw amino-acid sequence, 817 residues long: DNA replication licensing factor Mcm6 (817 aa).

A C4-type zinc finger spans residues 152–179 (CLDCQTEIRNVEQQFKFTNPTICRNPVC). Residues 338–544 (LYQNLISSLF…VVDYAIARKI (207 aa)) form the MCM domain. ATP-binding residues include Ser391, Thr392, Ala393, Lys394, Ser395, and Asn496. The short motif at 520–523 (SRFD) is the Arginine finger element. ADP is bound by residues Arg611 and Glu614.

Belongs to the MCM family. As to quaternary structure, component of the Mcm2-7 complex. The complex forms a toroidal hexameric ring with the proposed subunit order Mcm2-Mcm6-Mcm4-Mcm7-Mcm3-Mcm5. The heterodimers of Mcm4/Mcm6 and Mcm3/Mcm5 interact with Mcm2 and Mcm7. In terms of tissue distribution, in stage 12 embryos, strongly expressed in the CNS and weakly in the gut.

The protein localises to the nucleus. It catalyses the reaction ATP + H2O = ADP + phosphate + H(+). Acts as a component of the Mcm2-7 complex (Mcm complex) which is the putative replicative helicase essential for 'once per cell cycle' DNA replication initiation and elongation in eukaryotic cells. Core component of CDC45-MCM-GINS (CMG) helicase, the molecular machine that unwinds template DNA during replication, and around which the replisome is built. The active ATPase sites in the Mcm2-7 ring are formed through the interaction surfaces of two neighboring subunits such that a critical structure of a conserved arginine finger motif is provided in trans relative to the ATP-binding site of the Walker A box of the adjacent subunit. The six ATPase active sites, however, are likely to contribute differentially to the complex helicase activity Required for DNA replication and cell proliferation. Required for mitotic cycles, endocycles, and the special S phase associated with the amplification of chorion genes; has a role in origin unwinding or fork elongation at chorion loci. In Drosophila melanogaster (Fruit fly), this protein is DNA replication licensing factor Mcm6.